The primary structure comprises 427 residues: Inward rectifier potassium channel 2 (427 aa).

At M1–W81 the chain is on the cytoplasmic side. C76 is subject to S-nitrosocysteine. A helical membrane pass occupies residues R82 to I106. The Extracellular segment spans residues A107–S128. An intramembrane region (helical; Pore-forming) is located at residues F129–Q140. An intramembrane region (pore-forming) is located at residues T141 to F147. The Selectivity filter motif lies at T142–F147. Residues R148–V156 lie on the Extracellular side of the membrane. Residues A157 to A178 form a helical membrane-spanning segment. Residues V179–I427 are Cytoplasmic-facing. The interval A181–L208 is polyphosphoinositide (PIP2)-binding. The interval S384 to I427 is disordered. Residues S425–I427 carry the PDZ-binding motif.

It belongs to the inward rectifier-type potassium channel (TC 1.A.2.1) family. KCNJ2 subfamily. Homotetramer. Homomultimeric and heteromultimeric association with KCNJ4/Kir2.3. Can form heteromeric channels with Kir2.6/KCNJ18. Associates, via its PDZ-recognition domain, with a complex containing LIN7A, LIN7B, LIN7C, DLG1, CASK and APBA1. In terms of processing, S-nitrosylation increases the open probability and inward rectifying currents. In terms of tissue distribution, highly expressed in the ventricle and skeletal muscle, moderately in cerebrum and cerebellum. Only low levels are detected in kidney or lung.

Its subcellular location is the cell membrane. The protein localises to the sarcolemma. The protein resides in the T-tubule. The enzyme catalyses K(+)(in) = K(+)(out). Activated by phosphatidylinositol 4,5 biphosphate (PtdIns(4,5)P2). Inward rectifier potassium channels are characterized by a greater tendency to allow potassium to flow into the cell rather than out of it. Their voltage dependence is regulated by the concentration of extracellular potassium; as external potassium is raised, the voltage range of the channel opening shifts to more positive voltages. The inward rectification is mainly due to the blockage of outward current by internal magnesium. Can be blocked by extracellular barium and cesium. Probably participates in establishing action potential waveform and excitability of neuronal and muscle tissues. The chain is Inward rectifier potassium channel 2 (KCNJ2) from Oryctolagus cuniculus (Rabbit).